We begin with the raw amino-acid sequence, 503 residues long: Probable cytosol aminopeptidase (503 aa).

Residues K270 and D275 each coordinate Mn(2+). K282 is an active-site residue. Residues D293, D352, and E354 each coordinate Mn(2+). R356 is a catalytic residue.

The protein belongs to the peptidase M17 family. The cofactor is Mn(2+).

The protein resides in the cytoplasm. The enzyme catalyses Release of an N-terminal amino acid, Xaa-|-Yaa-, in which Xaa is preferably Leu, but may be other amino acids including Pro although not Arg or Lys, and Yaa may be Pro. Amino acid amides and methyl esters are also readily hydrolyzed, but rates on arylamides are exceedingly low.. The catalysed reaction is Release of an N-terminal amino acid, preferentially leucine, but not glutamic or aspartic acids.. Presumably involved in the processing and regular turnover of intracellular proteins. Catalyzes the removal of unsubstituted N-terminal amino acids from various peptides. The polypeptide is Probable cytosol aminopeptidase (Salmonella agona (strain SL483)).